The following is a 249-amino-acid chain: Probable phosphoglycerate mutase (249 aa).

Substrate contacts are provided by residues 9 to 16 (RHGESTWN), 22 to 23 (TG), Arg61, 88 to 91 (ERMY), Lys99, 115 to 116 (RR), and 184 to 185 (GN). The Tele-phosphohistidine intermediate role is filled by His10. The active-site Proton donor/acceptor is Glu88.

Belongs to the phosphoglycerate mutase family. BPG-dependent PGAM subfamily. Homodimer.

It carries out the reaction (2R)-2-phosphoglycerate = (2R)-3-phosphoglycerate. The catalysed reaction is (2R)-3-phospho-glyceroyl phosphate = (2R)-2,3-bisphosphoglycerate + H(+). Its function is as follows. Catalyzes the interconversion of 2-phosphoglycerate and 3-phosphoglycerate. The chain is Probable phosphoglycerate mutase (gpmA) from Dictyostelium discoideum (Social amoeba).